We begin with the raw amino-acid sequence, 189 residues long: Peptidyl-tRNA hydrolase (189 aa).

His-15 contacts tRNA. The active-site Proton acceptor is the His-20. The tRNA site is built by Phe-66, Asn-68, and Asn-114.

It belongs to the PTH family. In terms of assembly, monomer.

Its subcellular location is the cytoplasm. It catalyses the reaction an N-acyl-L-alpha-aminoacyl-tRNA + H2O = an N-acyl-L-amino acid + a tRNA + H(+). Functionally, hydrolyzes ribosome-free peptidyl-tRNAs (with 1 or more amino acids incorporated), which drop off the ribosome during protein synthesis, or as a result of ribosome stalling. Its function is as follows. Catalyzes the release of premature peptidyl moieties from peptidyl-tRNA molecules trapped in stalled 50S ribosomal subunits, and thus maintains levels of free tRNAs and 50S ribosomes. The chain is Peptidyl-tRNA hydrolase from Streptococcus equi subsp. equi (strain 4047).